Reading from the N-terminus, the 261-residue chain is Putative outer membrane protein TC_0650 (261 aa).

An N-terminal signal peptide occupies residues 1 to 17 (MRFLFAFILLCSPWVSE).

Its subcellular location is the cell outer membrane. The protein is Putative outer membrane protein TC_0650 of Chlamydia muridarum (strain MoPn / Nigg).